A 443-amino-acid chain; its full sequence is Squalene synthase (443 aa).

The next 2 helical transmembrane spans lie at 291–311 (TSFNFCAIPQVMAIATLELVF) and 423–443 (ILLLSLGVAVFGVVYGVVRII).

It belongs to the phytoene/squalene synthase family. Mg(2+) is required as a cofactor.

The protein localises to the endoplasmic reticulum membrane. It carries out the reaction 2 (2E,6E)-farnesyl diphosphate + NADPH + H(+) = squalene + 2 diphosphate + NADP(+). The catalysed reaction is 2 (2E,6E)-farnesyl diphosphate + NADH + H(+) = squalene + 2 diphosphate + NAD(+). Its pathway is terpene metabolism; lanosterol biosynthesis; lanosterol from farnesyl diphosphate: step 1/3. Its function is as follows. Catalyzes the condensation of 2 two farnesyl pyrophosphate moieties to form squalene. It is the first committed enzyme of the sterol biosynthesis pathway. Required for the biosynthesis of ergosterol. The chain is Squalene synthase (ERG9) from Cyberlindnera jadinii (Torula yeast).